The sequence spans 128 residues: Phosphoribosyl-AMP cyclohydrolase (128 aa).

Residue aspartate 77 coordinates Mg(2+). Cysteine 78 is a binding site for Zn(2+). 2 residues coordinate Mg(2+): aspartate 79 and aspartate 81. Residues cysteine 95 and cysteine 102 each coordinate Zn(2+).

Belongs to the PRA-CH family. As to quaternary structure, homodimer. It depends on Mg(2+) as a cofactor. Zn(2+) serves as cofactor.

It localises to the cytoplasm. The enzyme catalyses 1-(5-phospho-beta-D-ribosyl)-5'-AMP + H2O = 1-(5-phospho-beta-D-ribosyl)-5-[(5-phospho-beta-D-ribosylamino)methylideneamino]imidazole-4-carboxamide. It participates in amino-acid biosynthesis; L-histidine biosynthesis; L-histidine from 5-phospho-alpha-D-ribose 1-diphosphate: step 3/9. Its function is as follows. Catalyzes the hydrolysis of the adenine ring of phosphoribosyl-AMP. This is Phosphoribosyl-AMP cyclohydrolase from Methylococcus capsulatus (strain ATCC 33009 / NCIMB 11132 / Bath).